We begin with the raw amino-acid sequence, 325 residues long: Oligopeptide transport system permease protein OppB (325 aa).

A run of 6 helical transmembrane segments spans residues 12–32 (YLVL…LAFS), 102–122 (LVVG…WGAI), 135–155 (LALL…ILGA), 189–208 (LQHL…AGFS), 248–268 (IPMA…AVFV), and 290–310 (TNIV…AGLL). The 217-residue stretch at 95-311 (IGVSLRLLVV…AVVLLAGLLS (217 aa)) folds into the ABC transmembrane type-1 domain.

This sequence belongs to the binding-protein-dependent transport system permease family. OppBC subfamily. The complex is composed of an ATP-binding protein (OppD), two transmembrane proteins (OppB and OppC) and a solute-binding protein (OppA).

It is found in the cell inner membrane. Part of the ABC transporter complex OppABCD involved in the uptake of oligopeptides. Responsible for the translocation of the substrate across the membrane. This Mycobacterium bovis (strain ATCC BAA-935 / AF2122/97) protein is Oligopeptide transport system permease protein OppB.